Here is a 671-residue protein sequence, read N- to C-terminus: Zinc finger protein 750 (671 aa).

A CCHC-type zinc finger spans residues 25–51 (YKCFQCPFTCNEKSHLFNHMKYGLCKN). 4 residues coordinate Zn(2+): cysteine 27, cysteine 30, histidine 43, and cysteine 49. Disordered regions lie at residues 66–87 (PKVN…SPVP), 366–433 (ETSP…KDFT), and 592–671 (SSPG…PRVS). Polar residues-rich tracts occupy residues 67-78 (KVNSTDQKQPSN) and 402-412 (SPTNFTQNSQG).

The protein resides in the nucleus. In terms of biological role, transcription factor involved in epidermis differentiation. This Xenopus tropicalis (Western clawed frog) protein is Zinc finger protein 750 (znf750).